A 208-amino-acid polypeptide reads, in one-letter code: ATP synthase subunit b (208 aa).

The segment covering 1–18 (MFVSTAFAQTATESQPAS) has biased composition (polar residues). A disordered region spans residues 1–26 (MFVSTAFAQTATESQPASTAGEHGAA). The helical transmembrane segment at 56–78 (SQVLWLAITFGLFYLFLSRVVLP) threads the bilayer.

Belongs to the ATPase B chain family. In terms of assembly, F-type ATPases have 2 components, F(1) - the catalytic core - and F(0) - the membrane proton channel. F(1) has five subunits: alpha(3), beta(3), gamma(1), delta(1), epsilon(1). F(0) has three main subunits: a(1), b(2) and c(10-14). The alpha and beta chains form an alternating ring which encloses part of the gamma chain. F(1) is attached to F(0) by a central stalk formed by the gamma and epsilon chains, while a peripheral stalk is formed by the delta and b chains.

The protein resides in the cell inner membrane. In terms of biological role, f(1)F(0) ATP synthase produces ATP from ADP in the presence of a proton or sodium gradient. F-type ATPases consist of two structural domains, F(1) containing the extramembraneous catalytic core and F(0) containing the membrane proton channel, linked together by a central stalk and a peripheral stalk. During catalysis, ATP synthesis in the catalytic domain of F(1) is coupled via a rotary mechanism of the central stalk subunits to proton translocation. Functionally, component of the F(0) channel, it forms part of the peripheral stalk, linking F(1) to F(0). This chain is ATP synthase subunit b, found in Brucella melitensis biotype 1 (strain ATCC 23456 / CCUG 17765 / NCTC 10094 / 16M).